A 216-amino-acid polypeptide reads, in one-letter code: Protein-L-isoaspartate O-methyltransferase (216 aa).

Ser61 is an active-site residue.

Belongs to the methyltransferase superfamily. L-isoaspartyl/D-aspartyl protein methyltransferase family.

Its subcellular location is the cytoplasm. It catalyses the reaction [protein]-L-isoaspartate + S-adenosyl-L-methionine = [protein]-L-isoaspartate alpha-methyl ester + S-adenosyl-L-homocysteine. Its function is as follows. Catalyzes the methyl esterification of L-isoaspartyl residues in peptides and proteins that result from spontaneous decomposition of normal L-aspartyl and L-asparaginyl residues. It plays a role in the repair and/or degradation of damaged proteins. This chain is Protein-L-isoaspartate O-methyltransferase, found in Geobacter metallireducens (strain ATCC 53774 / DSM 7210 / GS-15).